The chain runs to 283 residues: 4-diphosphocytidyl-2-C-methyl-D-erythritol kinase (283 aa).

Lys10 is an active-site residue. 95-105 contacts ATP; the sequence is PVAAGLGGGSS. Asp137 is a catalytic residue.

Belongs to the GHMP kinase family. IspE subfamily.

The enzyme catalyses 4-CDP-2-C-methyl-D-erythritol + ATP = 4-CDP-2-C-methyl-D-erythritol 2-phosphate + ADP + H(+). The protein operates within isoprenoid biosynthesis; isopentenyl diphosphate biosynthesis via DXP pathway; isopentenyl diphosphate from 1-deoxy-D-xylulose 5-phosphate: step 3/6. Its function is as follows. Catalyzes the phosphorylation of the position 2 hydroxy group of 4-diphosphocytidyl-2C-methyl-D-erythritol. This chain is 4-diphosphocytidyl-2-C-methyl-D-erythritol kinase, found in Pediococcus pentosaceus (strain ATCC 25745 / CCUG 21536 / LMG 10740 / 183-1w).